The chain runs to 155 residues: 17.6 kDa class I heat shock protein 1 (155 aa).

In terms of domain architecture, sHSP spans 39–154; the sequence is SSSAIANARV…KAQVKSIDIS (116 aa).

This sequence belongs to the small heat shock protein (HSP20) family. In terms of assembly, forms oligomeric structures. Binds to AKR2A.

The protein localises to the cytoplasm. Possesses chaperone activity. This Arabidopsis thaliana (Mouse-ear cress) protein is 17.6 kDa class I heat shock protein 1 (HSP17.6A).